The primary structure comprises 306 residues: Putative B3 domain-containing protein Os03g0621600 (306 aa).

Positions 29-122 form a DNA-binding region, TF-B3 1; the sequence is FSVLCLMPIM…QLKTLIFDSS (94 aa). The interval 139 to 166 is disordered; sequence YDIAMRNSQDEKKKRKQRDISRQGTVKP. A DNA-binding region (TF-B3 2) is located at residues 210-306; the sequence is GYVMNNSSIH…VMDVHIIRRK (97 aa).

It is found in the nucleus. This is Putative B3 domain-containing protein Os03g0621600 from Oryza sativa subsp. japonica (Rice).